We begin with the raw amino-acid sequence, 855 residues long: Inactive rhomboid protein 1 (855 aa).

The Cytoplasmic portion of the chain corresponds to 1 to 411; it reads MSEARRDSTS…HRPFFTYWLT (411 aa). Serine 76 and serine 176 each carry phosphoserine. 2 positions are modified to phosphothreonine: threonine 180 and threonine 183. Serine 390 carries the post-translational modification Phosphoserine. Residues 412–432 form a helical membrane-spanning segment; the sequence is FVHSLVTILAVCIYGIAPVGF. Topologically, residues 433–655 are lumenal; the sequence is SQHETVDSVL…NPEVPDQFYR (223 aa). The N-linked (GlcNAc...) asparagine glycan is linked to asparagine 583. Residues 656–676 traverse the membrane as a helical segment; the sequence is LWLSLFLHAGILHCLVSICFQ. The Cytoplasmic portion of the chain corresponds to 677–691; sequence MTVLRDLEKLAGWHR. A helical transmembrane segment spans residues 692-712; sequence IAIIYLLSGVTGNLASAIFLP. At 713–714 the chain is on the lumenal side; that stretch reads YR. The chain crosses the membrane as a helical span at residues 715–735; that stretch reads AEVGPAGSQFGILACLFVELF. At 736-746 the chain is on the cytoplasmic side; it reads QSWQILARPWR. A helical membrane pass occupies residues 747–767; it reads AFFKLLAVVLFLFTFGLLPWI. At 768-772 the chain is on the lumenal side; sequence DNFAH. A helical transmembrane segment spans residues 773 to 793; sequence ISGFISGLFLSFAFLPYISFG. Topologically, residues 794–803 are cytoplasmic; sequence KFDLYRKRCQ. A helical membrane pass occupies residues 804–824; that stretch reads IIIFQVVFLGLLAGLVVLFYV. The Lumenal segment spans residues 825–855; it reads YPVRCEWCEFLTCIPFTDKFCEKYELDAQLH.

Belongs to the peptidase S54 family. Homodimer, or homooligomer. Interacts with TGFA and HBEGF. Interacts with EGF; may retain EGF in the endoplasmic reticulum and regulates its degradation through the endoplasmic reticulum-associated degradation (ERAD). Interacts (via cytoplasmic N-terminus) with FRMD8/iTAP; this interaction leads to mutual protein stabilization. Interacts with ADAM17/TACE. In terms of processing, N-glycosylated. As to expression, highly expressed in cerebellum, cerebrum, heart, skeletal muscle, placenta, pancreatic islet and testis. Detected at lower levels in colon, kidney, small intestine and lung.

Its subcellular location is the endoplasmic reticulum membrane. It is found in the golgi apparatus membrane. Its function is as follows. Regulates ADAM17 protease, a sheddase of the epidermal growth factor (EGF) receptor ligands and TNF, thereby plays a role in sleep, cell survival, proliferation, migration and inflammation. Does not exhibit any protease activity on its own. The chain is Inactive rhomboid protein 1 (RHBDF1) from Homo sapiens (Human).